A 620-amino-acid chain; its full sequence is E3 ubiquitin-protein ligase AMFR (620 aa).

A run of 7 helical transmembrane segments spans residues 75-95 (LFVWVMVNTACCILMLIGKVI), 115-135 (FWNFIFYKFIFIFGVLNVQRV), 138-158 (VVLWCLWFSMLIFLHLMVQLC), 179-199 (VLALLVSVLSCCGGLAVLCAL), 201-221 (GHIHGMHTVAFMAAECLLVTV), 247-267 (SSYIYYTDFIMELAILSLDLM), and 269-289 (HIHMLLFGNIWLSMASLVIFM). An RING-type; atypical zinc finger spans residues 334–372 (CAICWDSMTTARKLPCGHLFHNSCLRSWLEQDTSCPTCR). The CUE domain occupies 449–491 (QLNGMAHQIQEMFPQVPYHLILQDLQLTRSVEVTTDNILEGRI). The segment covering 510–526 (ASEDGAGASSGSEVAAP) has biased composition (low complexity). Disordered regions lie at residues 510 to 544 (ASEDGAGASSGSEVAAPEAEDFEVRGSRFSKSADE) and 569 to 598 (PEDGDAYSVLGADNDDSVPSIEDEDSDSVT). Residues 531 to 544 (FEVRGSRFSKSADE) show a composition bias toward basic and acidic residues. Residues 581–595 (DNDDSVPSIEDEDSD) are compositionally biased toward acidic residues.

Widely expressed.

The protein localises to the endoplasmic reticulum membrane. The catalysed reaction is [E2 ubiquitin-conjugating enzyme]-S-ubiquitinyl-L-cysteine + [acceptor protein]-L-cysteine = [E2 ubiquitin-conjugating enzyme]-L-cysteine + [acceptor protein]-S-ubiquitinyl-L-cysteine.. It participates in protein modification; protein ubiquitination. E3 ubiquitin-protein ligase that mediates the polyubiquitination of lysine and cysteine residues on target proteins. May participate in the final step of endoplasmic reticulum-associated degradation (ERAD). Required for proper lipid homeostasis. This Danio rerio (Zebrafish) protein is E3 ubiquitin-protein ligase AMFR.